The chain runs to 416 residues: Adenylosuccinate synthetase (416 aa).

GTP-binding positions include 13–19 (GDEGKGK) and 41–43 (GHT). D14 functions as the Proton acceptor in the catalytic mechanism. Positions 14 and 41 each coordinate Mg(2+). Residues 14-17 (DEGK), 39-42 (NAGH), T126, R140, Q220, T235, and R299 contribute to the IMP site. H42 acts as the Proton donor in catalysis. 295–301 (TTTGRRR) provides a ligand contact to substrate. GTP contacts are provided by residues R301, 327–329 (KLD), and 405–407 (STS).

It belongs to the adenylosuccinate synthetase family. Homodimer. The cofactor is Mg(2+).

It localises to the cytoplasm. It carries out the reaction IMP + L-aspartate + GTP = N(6)-(1,2-dicarboxyethyl)-AMP + GDP + phosphate + 2 H(+). It participates in purine metabolism; AMP biosynthesis via de novo pathway; AMP from IMP: step 1/2. In terms of biological role, plays an important role in the de novo pathway of purine nucleotide biosynthesis. Catalyzes the first committed step in the biosynthesis of AMP from IMP. This Campylobacter curvus (strain 525.92) protein is Adenylosuccinate synthetase.